The primary structure comprises 380 residues: Homoserine O-acetyltransferase (380 aa).

Residues Asn-70–Ile-366 enclose the AB hydrolase-1 domain. Ser-186 acts as the Nucleophile in catalysis. Arg-250 lines the substrate pocket. Catalysis depends on residues Asp-333 and His-361. Residue Asp-362 coordinates substrate.

The protein belongs to the AB hydrolase superfamily. MetX family. In terms of assembly, homodimer.

The protein resides in the cytoplasm. The enzyme catalyses L-homoserine + acetyl-CoA = O-acetyl-L-homoserine + CoA. It participates in amino-acid biosynthesis; L-methionine biosynthesis via de novo pathway; O-acetyl-L-homoserine from L-homoserine: step 1/1. In terms of biological role, transfers an acetyl group from acetyl-CoA to L-homoserine, forming acetyl-L-homoserine. In Thermus thermophilus (strain ATCC 27634 / DSM 579 / HB8), this protein is Homoserine O-acetyltransferase.